Reading from the N-terminus, the 72-residue chain is UPF0154 protein EF_1734 (72 aa).

The chain crosses the membrane as a helical span at residues 4-26; the sequence is GWVVLIAVIALLVGAAGGFFLAR.

This sequence belongs to the UPF0154 family.

The protein resides in the membrane. The polypeptide is UPF0154 protein EF_1734 (Enterococcus faecalis (strain ATCC 700802 / V583)).